We begin with the raw amino-acid sequence, 181 residues long: Diphosphoinositol polyphosphate phosphohydrolase NUDT4B (181 aa).

Substrate contacts are provided by residues Arg10, Lys18–Arg20, and Ser39–Arg41. The 128-residue stretch at Lys18 to Lys145 folds into the Nudix hydrolase domain. Gly50 and Glu66 together coordinate Mg(2+). The short motif at Gly51–Gly72 is the Nudix box element. The active-site Proton acceptor is the Glu69. Glu70 lines the Mg(2+) pocket. Residues Arg90–His92, Arg116, and Lys134 contribute to the substrate site.

It belongs to the Nudix hydrolase family. DIPP subfamily. Mg(2+) is required as a cofactor. It depends on Mn(2+) as a cofactor.

Its subcellular location is the cytoplasm. It carries out the reaction diphospho-myo-inositol polyphosphate + H2O = myo-inositol polyphosphate + phosphate.. Its function is as follows. Cleaves a beta-phosphate from the diphosphate groups in PP-InsP5 (diphosphoinositol pentakisphosphate), PP-InsP4 and [PP]2-InsP4 (bisdiphosphoinositol tetrakisphosphate), suggesting that it may play a role in signal transduction. Also able to catalyze the hydrolysis of dinucleoside oligophosphate Ap6A, but not Ap5A. The major reaction products are ADP and p4a from Ap6A. Also able to hydrolyze 5-phosphoribose 1-diphosphate. Does not play a role in U8 snoRNA decapping activity. Binds U8 snoRNA. This Homo sapiens (Human) protein is Diphosphoinositol polyphosphate phosphohydrolase NUDT4B.